The sequence spans 338 residues: Malate dehydrogenase, mitochondrial (338 aa).

The transit peptide at 1–24 directs the protein to the mitochondrion; that stretch reads MLSALARPASAALRRSFSTSAQNN. NAD(+) is bound by residues 31 to 37 and Asp57; that span reads GASGGIG. Ser33 is a glycosylation site (O-linked (GlcNAc) serine). 2 positions are modified to N6-acetyllysine; alternate: Lys78 and Lys91. Lys78 and Lys91 each carry N6-succinyllysine; alternate. Positions 104 and 110 each coordinate substrate. Residues Asn117 and 140–142 contribute to the NAD(+) site; that span reads IAN. Asn142 contacts substrate. At Lys165 the chain carries N6-acetyllysine. Substrate is bound at residue Arg176. At Lys185 the chain carries N6-acetyllysine; alternate. Lys185 carries the N6-succinyllysine; alternate modification. His200 acts as the Proton acceptor in catalysis. At Lys203 the chain carries N6-succinyllysine. N6-acetyllysine; alternate is present on residues Lys215 and Lys239. N6-succinyllysine; alternate is present on residues Lys215 and Lys239. Lys239 is subject to N6-malonyllysine; alternate. Ser246 carries the post-translational modification Phosphoserine. Residue Met251 participates in NAD(+) binding. Lys269 bears the N6-succinyllysine mark. Lys296, Lys301, Lys307, Lys314, and Lys324 each carry N6-acetyllysine; alternate. Lys296, Lys301, Lys307, Lys314, and Lys324 each carry N6-succinyllysine; alternate. Lys307 is modified (N6-malonyllysine; alternate). Ser326 carries the post-translational modification Phosphoserine. Residues Lys328, Lys329, and Lys335 each carry the N6-acetyllysine; alternate modification. Lys328 carries the post-translational modification N6-succinyllysine; alternate. Lys329 is subject to N6-malonyllysine; alternate. Lys335 is subject to N6-succinyllysine; alternate.

Belongs to the LDH/MDH superfamily. MDH type 1 family. In terms of assembly, homodimer. In terms of processing, acetylation is enhanced by up to 67% after treatment either with trichostin A (TSA) or with nicotinamide (NAM) with the appearance of tri- and tetraacetylations. Glucose also increases acetylation by about 60%.

It is found in the mitochondrion matrix. The catalysed reaction is (S)-malate + NAD(+) = oxaloacetate + NADH + H(+). Enzyme activity is enhanced by acetylation. This Homo sapiens (Human) protein is Malate dehydrogenase, mitochondrial (MDH2).